Reading from the N-terminus, the 416-residue chain is Enterobactin exporter EntS (416 aa).

Residues 1–21 (MNKQSWLLNLSLLKTHPAFRA) are Cytoplasmic-facing. A helical membrane pass occupies residues 22 to 42 (VFLARFISIVSLGLLGVAVPV). Over 43–55 (QIQMMTHSTWQVG) the chain is Periplasmic. Residues 56 to 76 (LSVTLTGGAMFVGLMVGGVLA) traverse the membrane as a helical segment. The Cytoplasmic segment spans residues 77-83 (DRYERKK). The chain crosses the membrane as a helical span at residues 84–104 (VILLARGTCGIGFIGLCLNAL). Residues 105-109 (LPEPS) are Periplasmic-facing. Residues 110 to 130 (LLAIYLLGLWDGFFASLGVTA) traverse the membrane as a helical segment. Topologically, residues 131 to 156 (LLAATPALVGRENLMQAGAITMLTVR) are cytoplasmic. Residues 157–177 (LGSVISPMIGGLLLATGGVAW) traverse the membrane as a helical segment. Position 178 (N178) is a topological domain, periplasmic. A helical membrane pass occupies residues 179 to 199 (YGLAAAGTFITLLPLLSLPAL). Residues 200–218 (PPPPQPREHPLKSLLAGFR) lie on the Cytoplasmic side of the membrane. Residues 219–239 (FLLASPLVGGIALLGGLLTMA) form a helical membrane-spanning segment. Topologically, residues 240-256 (SAVRVLYPALADNWQMS) are periplasmic. Residues 257–277 (AAQIGFLYAAIPLGAAIGALT) traverse the membrane as a helical segment. The Cytoplasmic segment spans residues 278 to 287 (SGKLAHSVRP). The helical transmembrane segment at 288–307 (GLLMLLSTLGAFLAISLFGL) threads the bilayer. Over 308-313 (MPMWIL) the chain is Periplasmic. The helical transmembrane segment at 314 to 336 (GVVCLALFGWLSAVSSLLQYTML) threads the bilayer. Residues 337-356 (QTQTPEAMLGRINGLWTAQN) are Cytoplasmic-facing. A helical transmembrane segment spans residues 357 to 377 (VTGDAIGAALLGGLGAMMTPV). A378 is a topological domain (periplasmic). The helical transmembrane segment at 379 to 399 (SASASGFGLLIIGVLLLLVLV) threads the bilayer. The Cytoplasmic segment spans residues 400-416 (ELRRFRQTPPQVTASDS).

The protein belongs to the major facilitator superfamily. EntS (TC 2.A.1.38) family.

It is found in the cell inner membrane. Component of an export pathway for enterobactin. The chain is Enterobactin exporter EntS from Escherichia coli O45:K1 (strain S88 / ExPEC).